Consider the following 24-residue polypeptide: Brevinin-1La (24 aa).

Cysteine 18 and cysteine 24 are joined by a disulfide.

In terms of tissue distribution, expressed by the skin glands.

It localises to the secreted. Antibacterial activity against Gram-positive bacterium S.aureus and Gram-negative bacterium E.coli. The sequence is that of Brevinin-1La from Rana luteiventris (Columbia spotted frog).